Consider the following 184-residue polypeptide: MRTFAVHESTIAKRYATALAELASELNILDSIRDELAHFQALLAESPEMHEMMVSPTVSKESQHKLISTYLEYAKPNDLTANFLRLLIDKHRMALLNDVATAIVRVVDERAGRIQVKVETPKALTPSLVAKLEKSLADVTGKEVSLEISEKPELLGGLVIRMGSVMLDDSLRTQLHRLKEIMKG.

The protein belongs to the ATPase delta chain family. In terms of assembly, F-type ATPases have 2 components, F(1) - the catalytic core - and F(0) - the membrane proton channel. F(1) has five subunits: alpha(3), beta(3), gamma(1), delta(1), epsilon(1). F(0) has three main subunits: a(1), b(2) and c(10-14). The alpha and beta chains form an alternating ring which encloses part of the gamma chain. F(1) is attached to F(0) by a central stalk formed by the gamma and epsilon chains, while a peripheral stalk is formed by the delta and b chains.

The protein localises to the cell inner membrane. F(1)F(0) ATP synthase produces ATP from ADP in the presence of a proton or sodium gradient. F-type ATPases consist of two structural domains, F(1) containing the extramembraneous catalytic core and F(0) containing the membrane proton channel, linked together by a central stalk and a peripheral stalk. During catalysis, ATP synthesis in the catalytic domain of F(1) is coupled via a rotary mechanism of the central stalk subunits to proton translocation. Its function is as follows. This protein is part of the stalk that links CF(0) to CF(1). It either transmits conformational changes from CF(0) to CF(1) or is implicated in proton conduction. The sequence is that of ATP synthase subunit delta from Magnetococcus marinus (strain ATCC BAA-1437 / JCM 17883 / MC-1).